We begin with the raw amino-acid sequence, 156 residues long: 6,7-dimethyl-8-ribityllumazine synthase (156 aa).

5-amino-6-(D-ribitylamino)uracil is bound by residues Phe-22, 57–59 (AYE), and 81–83 (TVI). (2S)-2-hydroxy-3-oxobutyl phosphate is bound at residue 86–87 (GT). Catalysis depends on His-89, which acts as the Proton donor. Position 114 (Phe-114) interacts with 5-amino-6-(D-ribitylamino)uracil. Arg-128 is a binding site for (2S)-2-hydroxy-3-oxobutyl phosphate.

It belongs to the DMRL synthase family. In terms of assembly, forms an icosahedral capsid composed of 60 subunits, arranged as a dodecamer of pentamers.

The enzyme catalyses (2S)-2-hydroxy-3-oxobutyl phosphate + 5-amino-6-(D-ribitylamino)uracil = 6,7-dimethyl-8-(1-D-ribityl)lumazine + phosphate + 2 H2O + H(+). The protein operates within cofactor biosynthesis; riboflavin biosynthesis; riboflavin from 2-hydroxy-3-oxobutyl phosphate and 5-amino-6-(D-ribitylamino)uracil: step 1/2. Its function is as follows. Catalyzes the formation of 6,7-dimethyl-8-ribityllumazine by condensation of 5-amino-6-(D-ribitylamino)uracil with 3,4-dihydroxy-2-butanone 4-phosphate. This is the penultimate step in the biosynthesis of riboflavin. The chain is 6,7-dimethyl-8-ribityllumazine synthase from Proteus mirabilis (strain HI4320).